The sequence spans 454 residues: Carbon catabolite repressor protein 4 homolog 5 (454 aa).

Residues 1–76 are disordered; the sequence is MSGYERKNTT…SLRRRRRTKE (76 aa). Residues 31 to 41 show a composition bias toward basic and acidic residues; that stretch reads VYEKSNRKESI. The span at 61–75 shows a compositional bias: basic residues; sequence VRHSKSSLRRRRRTK. Mg(2+) is bound at residue E153.

Belongs to the CCR4/nocturin family. In terms of assembly, component of the CCR4-NOT complex, at least composed of CRR4 and CAF1 proteins. Mg(2+) serves as cofactor.

It is found in the nucleus. The protein resides in the cytoplasm. The catalysed reaction is Exonucleolytic cleavage of poly(A) to 5'-AMP.. Functionally, acts as a catalytic component of the CCR4-NOT core complex, which in the nucleus seems to be a general transcription factor, and in the cytoplasm the major mRNA deadenylase involved in mRNA turnover. This is Carbon catabolite repressor protein 4 homolog 5 (CCR4-5) from Arabidopsis thaliana (Mouse-ear cress).